A 385-amino-acid polypeptide reads, in one-letter code: GDP-D-glucose phosphorylase 1 (385 aa).

His218 functions as the Tele-GMP-histidine intermediate in the catalytic mechanism.

This sequence belongs to the GDPGP1 family.

Its subcellular location is the cytoplasm. It carries out the reaction GDP-alpha-D-glucose + phosphate = alpha-D-glucose 1-phosphate + GDP + H(+). Functionally, specific and highly efficient GDP-D-glucose phosphorylase regulating the levels of GDP-D-glucose in cells. This is GDP-D-glucose phosphorylase 1 (GDPGP1) from Homo sapiens (Human).